Here is a 239-residue protein sequence, read N- to C-terminus: Ribonuclease PH (239 aa).

Phosphate contacts are provided by residues arginine 86 and 124–126; that span reads GTR.

Belongs to the RNase PH family. Homohexameric ring arranged as a trimer of dimers.

The catalysed reaction is tRNA(n+1) + phosphate = tRNA(n) + a ribonucleoside 5'-diphosphate. Functionally, phosphorolytic 3'-5' exoribonuclease that plays an important role in tRNA 3'-end maturation. Removes nucleotide residues following the 3'-CCA terminus of tRNAs; can also add nucleotides to the ends of RNA molecules by using nucleoside diphosphates as substrates, but this may not be physiologically important. Probably plays a role in initiation of 16S rRNA degradation (leading to ribosome degradation) during starvation. The polypeptide is Ribonuclease PH (Rhizobium etli (strain ATCC 51251 / DSM 11541 / JCM 21823 / NBRC 15573 / CFN 42)).